We begin with the raw amino-acid sequence, 101 residues long: Peroxisomal biogenesis factor 39 (101 aa).

The protein localises to the peroxisome. Its function is as follows. May be a peroxin involved in the PTS2-mediated protein import pathway. This chain is Peroxisomal biogenesis factor 39, found in Homo sapiens (Human).